A 260-amino-acid polypeptide reads, in one-letter code: 3'-5' ssDNA/RNA exonuclease TatD (260 aa).

Residues Glu91, His127, and His152 each coordinate a divalent metal cation.

The protein belongs to the metallo-dependent hydrolases superfamily. TatD-type hydrolase family. TatD subfamily. As to quaternary structure, monomer. The cofactor is Mg(2+).

The protein localises to the cytoplasm. Functionally, 3'-5' exonuclease that prefers single-stranded DNA and RNA. May play a role in the H(2)O(2)-induced DNA damage repair. This chain is 3'-5' ssDNA/RNA exonuclease TatD, found in Salmonella typhimurium (strain LT2 / SGSC1412 / ATCC 700720).